Consider the following 320-residue polypeptide: Phospho-N-acetylmuramoyl-pentapeptide-transferase (320 aa).

The next 9 helical transmembrane spans lie at 5-25, 51-71, 76-96, 124-144, 145-165, 176-196, 198-218, 233-255, and 298-318; these read LWAL…LIKF, MGGL…GAAY, GVVA…IGGI, VVIM…IPMI, GTIN…VGWS, GLLA…AMHM, NHII…FLIF, LALG…LIWF, and WQID…GIFY.

This sequence belongs to the glycosyltransferase 4 family. MraY subfamily. The cofactor is Mg(2+).

It is found in the cell membrane. The enzyme catalyses UDP-N-acetyl-alpha-D-muramoyl-L-alanyl-gamma-D-glutamyl-L-lysyl-D-alanyl-D-alanine + di-trans,octa-cis-undecaprenyl phosphate = Mur2Ac(oyl-L-Ala-gamma-D-Glu-L-Lys-D-Ala-D-Ala)-di-trans,octa-cis-undecaprenyl diphosphate + UMP. It participates in cell wall biogenesis; peptidoglycan biosynthesis. Its function is as follows. Catalyzes the initial step of the lipid cycle reactions in the biosynthesis of the cell wall peptidoglycan: transfers peptidoglycan precursor phospho-MurNAc-pentapeptide from UDP-MurNAc-pentapeptide onto the lipid carrier undecaprenyl phosphate, yielding undecaprenyl-pyrophosphoryl-MurNAc-pentapeptide, known as lipid I. The sequence is that of Phospho-N-acetylmuramoyl-pentapeptide-transferase from Leuconostoc citreum (strain KM20).